Reading from the N-terminus, the 382-residue chain is MNNFVKQVASKSLKPTKKLSPLDEVISLNECIISFNLDNFYYCNDGLFTKPINTPEDVLKSLLIMESFAYEKMIIKGLIKILISRAYINDIYFTPFGWLTGVDDDPETHVVIKIIFNSSLISIKSQVIEYLKPYNVNNLSVLTTEKELSINTFNVPDSIPISIISFFPFDTDFILVILFFGVYNDSYCGISYISPKERLPYIIEILKPLVLEINMLSDEIGRTSSIRIFNSTSVKKFPTNTLTSICEIVYSFDESSFTTPKTFTPLNASPYIPKKIVSLLDLPSNVEIKAISRSGVDFITHINNKRLTTILVIAKDNFLKNSTFSGTFIKENIIWKGIYTYRIIKSSFPVPTIKSVTNKKKICKKHCFVNSQYTTRTLSHIL.

Belongs to the orthopoxvirus OPG082 family.

It is found in the virion. Its function is as follows. Binds to the hairpin form of the viral telomeric sequence. Might direct genome encapsidation into the virus particle. This is Telomere-binding protein OPG082 (OPG082) from Monkeypox virus.